The primary structure comprises 312 residues: MRITIAGAGAMGSRFGLMLHKGGNEVTLIDGWPEHVKAIKEHGLRANYNGEELTAHLSVELQSEISSKEKTDLIILFTKAMQLDKMLQDIKPLIDEHTKVLCLLNGIGHEDTIEKYVSKNNIFIGNTMWTAGLEGPGKAKLFGDGSVELQNLISGEEETAKKLAEILSESGLNAKYSNNIHYSIYRKACVNGTMNGLCTILDTNMAGLGETKPAHDMVVTIVNEFAAVAKFENVNLDIAEVVQHVETCFDPSTIGLHYPSMYQDLIKNNRLTEIDYINGAVSRKGKKYNVATPYCDFLTQLVHSKEELLKAK.

NADP(+) contacts are provided by residues 7 to 12 (GAGAMG), Asn105, and Ala131. Asn105 is a binding site for substrate. The active-site Proton donor is the Lys187. Substrate contacts are provided by Asn191, Asn195, and Ser260. Glu273 contributes to the NADP(+) binding site.

It belongs to the ketopantoate reductase family.

The protein localises to the cytoplasm. It catalyses the reaction (R)-pantoate + NADP(+) = 2-dehydropantoate + NADPH + H(+). The protein operates within cofactor biosynthesis; (R)-pantothenate biosynthesis; (R)-pantoate from 3-methyl-2-oxobutanoate: step 2/2. Catalyzes the NADPH-dependent reduction of ketopantoate into pantoic acid. This is 2-dehydropantoate 2-reductase from Lactococcus lactis subsp. lactis (strain IL1403) (Streptococcus lactis).